Here is a 342-residue protein sequence, read N- to C-terminus: Serpentine receptor class beta-16 (342 aa).

Residues 1–22 (MDRELIEICKENSATAFSVGYQ) lie on the Extracellular side of the membrane. A helical membrane pass occupies residues 23–43 (IVYLIYVVLSVTSIFTCSYFI). Topologically, residues 44–61 (KTFIWNSTFHPNFKLLLT) are cytoplasmic. A helical transmembrane segment spans residues 62–82 (MYFFAAIFHSFLFTASYLMMI). Residues 83-102 (ERFLDYQTDCDIHVSMVPYA) are Extracellular-facing. Residues 103-123 (IVHSSIACCLFCGMLTQVFMV) form a helical membrane-spanning segment. Topologically, residues 124–141 (IERLLATIKIESYEHNTS) are cytoplasmic. The helical transmembrane segment at 142-162 (FWHILAYLFFCIVLPLSLLVW) threads the bilayer. Topologically, residues 163-187 (AYQDADYNSPVITAISPPKGVEIRL) are extracellular. The chain crosses the membrane as a helical span at residues 188-208 (NILYIFCFFLAILALILLQVV). At 209–237 (RFVNKRRESRIEISLSGRFQIVENIDTTT) the chain is on the cytoplasmic side. A helical membrane pass occupies residues 238-258 (FISSILIINMIMSVIYIVGTF). The Extracellular portion of the chain corresponds to 259–274 (TLRNFQFDAFINNQPA). The chain crosses the membrane as a helical span at residues 275-295 (LATVKTIFYLHPLFSFLMPLI). Over 296 to 342 (SSYHLSKMRERRVKRREHLMAIKTKGREGSDAYNQLLHDQWTQHFLK) the chain is Cytoplasmic.

This sequence belongs to the nematode receptor-like protein srb family. In terms of tissue distribution, expressed throughout the nervous system, in pharyngeal muscle, hermaphrodite vulval muscles and in the male tail. Not expressed in male somatic gonads or sperm.

Its subcellular location is the cell membrane. It is found in the perikaryon. The protein localises to the cell projection. The protein resides in the dendrite. G-protein coupled receptor. Plays a role in the navigational capacity of sperm and promotes the targeting of sperm derived from males to the fertilization site in the uterus of hermaphrodites. The chain is Serpentine receptor class beta-16 from Caenorhabditis elegans.